Consider the following 337-residue polypeptide: Oligopeptide transport ATP-binding protein OppD (337 aa).

The 250-residue stretch at 20–269 (LNVKDLRVTF…PVHPYSIGLL (250 aa)) folds into the ABC transporter domain. 56–63 (GESGSGKS) provides a ligand contact to ATP.

Belongs to the ABC transporter superfamily. In terms of assembly, the complex is composed of two ATP-binding proteins (OppD and OppF), two transmembrane proteins (OppB and OppC) and a solute-binding protein (OppA or MppA).

It is found in the cell inner membrane. The catalysed reaction is a [peptide](out) + ATP + H2O = a [peptide](in) + ADP + phosphate + H(+). It carries out the reaction L-alanyl-gamma-D-glutamyl-meso-2,6-diaminopimelate(out) + ATP + H2O = L-alanyl-gamma-D-glutamyl-meso-2,6-diaminopimelate(in) + ADP + phosphate + H(+). In terms of biological role, part of the ABC transporter complex OppABCDF involved in the uptake of oligopeptides and of the ABC transporter complex MppA-OppBCDF involved in the uptake of the cell wall murein tripeptide L-alanyl-gamma-D-glutamyl-meso-diaminopimelate. Probably responsible for energy coupling to the transport system. Plays an important nutritional role and is involved in the recycling of cell wall peptides. This Escherichia coli (strain K12) protein is Oligopeptide transport ATP-binding protein OppD (oppD).